The sequence spans 1082 residues: DNA-directed RNA polymerase subunit beta (1082 aa).

It belongs to the RNA polymerase beta chain family. As to quaternary structure, in plastids the minimal PEP RNA polymerase catalytic core is composed of four subunits: alpha, beta, beta', and beta''. When a (nuclear-encoded) sigma factor is associated with the core the holoenzyme is formed, which can initiate transcription.

The protein localises to the plastid. It localises to the chloroplast. The catalysed reaction is RNA(n) + a ribonucleoside 5'-triphosphate = RNA(n+1) + diphosphate. In terms of biological role, DNA-dependent RNA polymerase catalyzes the transcription of DNA into RNA using the four ribonucleoside triphosphates as substrates. This chain is DNA-directed RNA polymerase subunit beta, found in Euglena gracilis.